The sequence spans 169 residues: Allophycocyanin subunit beta-18 (169 aa).

An N4-methylasparagine modification is found at Asn72. Cys82 contacts (2R,3E)-phycocyanobilin.

Belongs to the phycobiliprotein family. As to quaternary structure, heterodimer of an alpha and a beta chain. Post-translationally, contains one covalently linked phycocyanobilin chromophore.

The protein localises to the plastid. It localises to the cyanelle thylakoid membrane. Its function is as follows. Light-harvesting photosynthetic bile pigment-protein from the phycobiliprotein complex. Allophycocyanin has a maximum absorption at approximately 650 nanometers. This Cyanophora paradoxa protein is Allophycocyanin subunit beta-18 (apcF).